Here is a 200-residue protein sequence, read N- to C-terminus: MKVLITGFEPFGGEEINPSWEAVRRLPDEIAGAELIKRQLPVTFRGVRELLPRLIVETKPDLVILTGQAGGRPNITVERVAINVMDSTMPDNEGYTPEDEPIFEGAPDAYFATLPIKAIVKALREAKIPAAVSNTAGTYVCNTAMYTVLHTIAVAGMETKAGFIHVPFIHEQALDKPRPSMALETVVKAYEVIIKTSLKA.

Catalysis depends on residues glutamate 78, cysteine 141, and histidine 165.

The protein belongs to the peptidase C15 family. As to quaternary structure, homotetramer.

The protein resides in the cytoplasm. It carries out the reaction Release of an N-terminal pyroglutamyl group from a polypeptide, the second amino acid generally not being Pro.. Removes 5-oxoproline from various penultimate amino acid residues except L-proline. The polypeptide is Pyrrolidone-carboxylate peptidase (Thermococcus onnurineus (strain NA1)).